Here is a 238-residue protein sequence, read N- to C-terminus: U2 small nuclear ribonucleoprotein A' (238 aa).

LRR repeat units follow at residues 19 to 40 (KQVT…GITK), 42 to 63 (TYEV…PRLK), 64 to 84 (NLKV…DKLP), and 89 to 110 (HLQS…RILC). The region spanning 123–161 (NPITDSPNYRYFIVWLIPTLKVLDFSKVKQKELVKAKEL) is the LRRCT domain.

Belongs to the U2 small nuclear ribonucleoprotein A family. Associated with the spliceosome.

The protein resides in the nucleus. Involved in pre-mRNA splicing. This chain is U2 small nuclear ribonucleoprotein A' (LEA1), found in Debaryomyces hansenii (strain ATCC 36239 / CBS 767 / BCRC 21394 / JCM 1990 / NBRC 0083 / IGC 2968) (Yeast).